We begin with the raw amino-acid sequence, 33 residues long: Photosystem II reaction center protein Psb30 (33 aa).

Residues 5–25 (VIAQLTVLSLIVLSGPLVIIL) form a helical membrane-spanning segment.

The protein belongs to the Psb30/Ycf12 family. In terms of assembly, PSII is composed of 1 copy each of membrane proteins PsbA, PsbB, PsbC, PsbD, PsbE, PsbF, PsbH, PsbI, PsbJ, PsbK, PsbL, PsbM, PsbT, PsbX, PsbY, PsbZ, Psb30/Ycf12, peripheral proteins of the oxygen-evolving complex and a large number of cofactors. It forms dimeric complexes.

The protein resides in the plastid. It localises to the chloroplast thylakoid membrane. Functionally, a core subunit of photosystem II (PSII), probably helps stabilize the reaction center. The sequence is that of Photosystem II reaction center protein Psb30 from Chlorokybus atmophyticus (Soil alga).